The following is a 171-amino-acid chain: GTP-dependent dephospho-CoA kinase (171 aa).

GTP-binding residues include Asp-49, Val-51, Asp-68, and Glu-122.

This sequence belongs to the GTP-dependent DPCK family.

It carries out the reaction 3'-dephospho-CoA + GTP = GDP + CoA + H(+). It functions in the pathway cofactor biosynthesis; coenzyme A biosynthesis. Its function is as follows. Catalyzes the GTP-dependent phosphorylation of the 3'-hydroxyl group of dephosphocoenzyme A to form coenzyme A (CoA). This Hyperthermus butylicus (strain DSM 5456 / JCM 9403 / PLM1-5) protein is GTP-dependent dephospho-CoA kinase.